The following is a 76-amino-acid chain: Endothelin-1 (76 aa).

The endothelin-like stretch occupies residues 30–44 (CQCASQKDKKCWNFC).

This sequence belongs to the endothelin/sarafotoxin family.

The protein localises to the secreted. Endothelins are endothelium-derived vasoconstrictor peptides. Probable ligand for G-protein coupled receptors EDNRA and EDNRB which activates PTK2B, BCAR1, BCAR3 and, GTPases RAP1 and RHOA cascade in glomerular mesangial cells. Also binds the DEAR/FBXW7-AS1 receptor. Promotes mesenteric arterial wall remodeling via activation of ROCK signaling and subsequent colocalization of NFATC3 with F-actin filaments. NFATC3 then translocates to the nucleus where it subsequently promotes the transcription of the smooth muscle hypertrophy and differentiation marker ACTA2. This is Endothelin-1 (EDN1) from Macaca fascicularis (Crab-eating macaque).